Here is a 537-residue protein sequence, read N- to C-terminus: Tyrosine-protein kinase Yes (537 aa).

Positions 1–22 are enriched in basic and acidic residues; it reads MGCIKSKEDKGPSIKYRTEPKP. A disordered region spans residues 1 to 60; sequence MGCIKSKEDKGPSIKYRTEPKPDPGSQYGADPTQATQSPGIKGPAPNFNSHSMTPFGGSS. The N-myristoyl glycine moiety is linked to residue Gly2. Cys3 carries the S-palmitoyl cysteine; in membrane form lipid modification. The region spanning 85–146 is the SH3 domain; sequence GGVTVFVALY…PSNYVAPADS (62 aa). The SH2 domain occupies 152 to 249; that stretch reads WYFGKMGRKD…GLCYRLTTVC (98 aa). The Protein kinase domain maps to 271–524; it reads LRLDVKLGQG…YIQSFLEDYF (254 aa). ATP contacts are provided by residues 277 to 285 and Lys299; that span reads LGQGCFGEV. Catalysis depends on Asp390, which acts as the Proton acceptor. Position 420 is a phosphotyrosine; by autocatalysis (Tyr420). The residue at position 531 (Tyr531) is a Phosphotyrosine; by CSK.

The protein belongs to the protein kinase superfamily. Tyr protein kinase family. SRC subfamily. Autophosphorylated at Tyr-420 inducing activation. Post-translationally, palmitoylation at Cys-3 promotes membrane localization.

It is found in the cell membrane. It localises to the cytoplasm. The protein resides in the cytoskeleton. The protein localises to the microtubule organizing center. Its subcellular location is the centrosome. It is found in the cytosol. It localises to the cell junction. The enzyme catalyses L-tyrosyl-[protein] + ATP = O-phospho-L-tyrosyl-[protein] + ADP + H(+). In terms of biological role, non-receptor protein tyrosine kinase that is involved in the regulation of cell growth and survival, apoptosis, cell-cell adhesion, cytoskeleton remodeling, differentiation, G2/M progression and cytokinesis. This Xenopus laevis (African clawed frog) protein is Tyrosine-protein kinase Yes (yes1).